Here is a 506-residue protein sequence, read N- to C-terminus: Probable alpha-L-arabinofuranosidase B (506 aa).

The first 26 residues, 1-26, serve as a signal peptide directing secretion; sequence MLSQPSRERAFVLALGLVVSSSLAAA. The interval 27-343 is catalytic; that stretch reads APCDIYSSGG…ADIVAANYAV (317 aa). 3 cysteine pairs are disulfide-bonded: Cys29–Cys39, Cys89–Cys94, and Cys184–Cys185. Residue Asp227 coordinates substrate. Glu229 acts as the Nucleophile in catalysis. Residue Asn230 participates in substrate binding. Residue Asn285 is glycosylated (N-linked (GlcNAc...) asparagine). Substrate is bound at residue Gly304. The active-site Proton donor is Asp305. The segment at 344–506 is ABD; sequence TSLTSGPALT…VSWVISSGFA (163 aa). A disulfide bridge connects residues Cys409 and Cys447. Substrate is bound by residues His424, Asn426, Phe427, Asp443, His471, Leu476, and Asp496.

This sequence belongs to the glycosyl hydrolase 54 family.

It is found in the secreted. The enzyme catalyses Hydrolysis of terminal non-reducing alpha-L-arabinofuranoside residues in alpha-L-arabinosides.. It functions in the pathway glycan metabolism; L-arabinan degradation. Its function is as follows. Alpha-L-arabinofuranosidase involved in the degradation of arabinoxylan, a major component of plant hemicellulose. Able to hydrolyze 1,5-, 1,3- and 1,2-alpha-linkages not only in L-arabinofuranosyl oligosaccharides, but also in polysaccharides containing terminal non-reducing L-arabinofuranoses in side chains, like L-arabinan, arabinogalactan and arabinoxylan. This is Probable alpha-L-arabinofuranosidase B (abfB) from Aspergillus clavatus (strain ATCC 1007 / CBS 513.65 / DSM 816 / NCTC 3887 / NRRL 1 / QM 1276 / 107).